A 199-amino-acid chain; its full sequence is Charged multivesicular body protein 1B1 (199 aa).

Residues 10-48 are a coiled coil; it reads NLKFAAKELNRSSKKCDKEEKAEKAKIKKAIQKGNMEVA. The segment at 132 to 156 is interaction with IST1; the sequence is MEDTMSSTTTLTTPQNQVDMLLQEM. The disordered stretch occupies residues 167–199; it reads ELPQGQTGSVGTSVASAEQDELSQRLARLRDQV. The segment covering 170–182 has biased composition (polar residues); sequence QGQTGSVGTSVAS. Positions 174–199 are interaction with SPAST; the sequence is GSVGTSVASAEQDELSQRLARLRDQV. Positions 178 to 199 form a coiled coil; that stretch reads TSVASAEQDELSQRLARLRDQV. The tract at residues 180–196 is interaction with VPS4A, MITD1 and STAMBP; sequence VASAEQDELSQRLARLR. The tract at residues 180–199 is interaction with VTA1; the sequence is VASAEQDELSQRLARLRDQV. An interaction with VPS4B region spans residues 183–199; sequence AEQDELSQRLARLRDQV. The MIT-interacting motif signature appears at 186–196; the sequence is DELSQRLARLR.

Belongs to the SNF7 family. In terms of assembly, probable peripherally associated component of the endosomal sorting required for transport complex III (ESCRT-III). ESCRT-III components are thought to multimerize to form a flat lattice on the perimeter membrane of the endosome. Several assembly forms of ESCRT-III may exist that interact and act sequentially. Interacts with CHMP1A. Interacts with VTA1; the interaction probably involves the open conformation of CHMP1B. Interacts with CHMP2A. Interacts with VPS4A; the interaction is direct. Interacts with VPS4B; the interaction is direct. Interacts with SPAST (via MIT domain); the interaction is direct. Interacts with IST1. Interacts with MITD1. Interacts with STAMBP.

It is found in the cytoplasm. The protein localises to the cytosol. The protein resides in the endosome. It localises to the late endosome membrane. Functionally, probable peripherally associated component of the endosomal sorting required for transport complex III (ESCRT-III) which is involved in multivesicular bodies (MVBs) formation and sorting of endosomal cargo proteins into MVBs. MVBs contain intraluminal vesicles (ILVs) that are generated by invagination and scission from the limiting membrane of the endosome and mostly are delivered to lysosomes enabling degradation of membrane proteins, such as stimulated growth factor receptors, lysosomal enzymes and lipids. The MVB pathway appears to require the sequential function of ESCRT-O, -I,-II and -III complexes. ESCRT-III proteins mostly dissociate from the invaginating membrane before the ILV is released. The ESCRT machinery also functions in topologically equivalent membrane fission events, such as the terminal stages of cytokinesis. ESCRT-III proteins are believed to mediate the necessary vesicle extrusion and/or membrane fission activities, possibly in conjunction with the AAA ATPase VPS4. Involved in cytokinesis. Involved in recruiting VPS4A and/or VPS4B and SPAST to the midbody of dividing cells. In Mus musculus (Mouse), this protein is Charged multivesicular body protein 1B1.